The following is a 574-amino-acid chain: MAVEENNMPVVSQQPQAGEDVISSLSKDSHLSAQSQKYSNDELKAGESGSEGSQSVPIEIPKKPMSEYVTVSLLCLCVAFGGFMFGWDTGTISGFVVQTDFLRRFGMKHKDGTHYLSNVRTGLIVAIFNIGCAFGGIILSKGGDMYGRKKGLSIVVSVYIVGIIIQIASINKWYQYFIGRIISGLGVGGIAVLCPMLISEIAPKHLRGTLVSCYQLMITAGIFLGYCTNYGTKSYSNSVQWRVPLGLCFAWSLFMIGALTLVPESPRYLCEVNKVEDAKRSIAKSNKVSPEDPAVQAELDLIMAGIEAEKLAGNASWGELFSTKTKVFQRLLMGVFVQMFQQLTGNNYFFYYGTVIFKSVGLDDSFETSIVIGVVNFASTFFSLWTVENLGHRKCLLLGAATMMACMVIYASVGVTRLYPHGKSQPSSKGAGNCMIVFTCFYIFCYATTWAPVAWVITAESFPLRVKSKCMALASASNWVWGFLIAFFTPFITSAINFYYGYVFMGCLVAMFFYVFFFVPETKGLSLEEIQELWEEGVLPWKSEGWIPSSRRGNNYDLEDLQHDDKPWYKAMLE.

The interval 1–57 is disordered; it reads MAVEENNMPVVSQQPQAGEDVISSLSKDSHLSAQSQKYSNDELKAGESGSEGSQSVP. Over 1 to 70 the chain is Cytoplasmic; the sequence is MAVEENNMPV…PKKPMSEYVT (70 aa). Residues 23-38 are compositionally biased toward polar residues; that stretch reads SSLSKDSHLSAQSQKY. Residues Ser32, Ser35, Ser39, Ser48, Ser50, Ser53, and Ser55 each carry the phosphoserine modification. A helical membrane pass occupies residues 71–91; that stretch reads VSLLCLCVAFGGFMFGWDTGT. Residues 92–121 are Extracellular-facing; sequence ISGFVVQTDFLRRFGMKHKDGTHYLSNVRT. A helical membrane pass occupies residues 122–142; the sequence is GLIVAIFNIGCAFGGIILSKG. Residues 143–149 lie on the Cytoplasmic side of the membrane; sequence GDMYGRK. The chain crosses the membrane as a helical span at residues 150-170; that stretch reads KGLSIVVSVYIVGIIIQIASI. At 171–175 the chain is on the extracellular side; that stretch reads NKWYQ. Residues 176 to 196 form a helical membrane-spanning segment; it reads YFIGRIISGLGVGGIAVLCPM. Residues 197–207 lie on the Cytoplasmic side of the membrane; the sequence is LISEIAPKHLR. Residues 208–228 traverse the membrane as a helical segment; that stretch reads GTLVSCYQLMITAGIFLGYCT. Over 229-242 the chain is Extracellular; that stretch reads NYGTKSYSNSVQWR. Residues 243–263 form a helical membrane-spanning segment; that stretch reads VPLGLCFAWSLFMIGALTLVP. The Cytoplasmic segment spans residues 264 to 342; the sequence is ESPRYLCEVN…MGVFVQMFQQ (79 aa). A helical membrane pass occupies residues 343 to 362; it reads LTGNNYFFYYGTVIFKSVGL. Residues 363-366 lie on the Extracellular side of the membrane; the sequence is DDSF. Residues 367 to 387 traverse the membrane as a helical segment; the sequence is ETSIVIGVVNFASTFFSLWTV. Residues 388 to 394 lie on the Cytoplasmic side of the membrane; it reads ENLGHRK. A helical transmembrane segment spans residues 395 to 415; sequence CLLLGAATMMACMVIYASVGV. Topologically, residues 416-435 are extracellular; that stretch reads TRLYPHGKSQPSSKGAGNCM. Residues 436-456 traverse the membrane as a helical segment; that stretch reads IVFTCFYIFCYATTWAPVAWV. Residues 457-472 lie on the Cytoplasmic side of the membrane; that stretch reads ITAESFPLRVKSKCMA. A helical membrane pass occupies residues 473–493; sequence LASASNWVWGFLIAFFTPFIT. Residues 494–499 lie on the Extracellular side of the membrane; sequence SAINFY. A helical transmembrane segment spans residues 500-520; it reads YGYVFMGCLVAMFFYVFFFVP. Topologically, residues 521 to 574 are cytoplasmic; that stretch reads ETKGLSLEEIQELWEEGVLPWKSEGWIPSSRRGNNYDLEDLQHDDKPWYKAMLE.

It belongs to the major facilitator superfamily. Sugar transporter (TC 2.A.1.1) family.

The protein resides in the membrane. Functionally, GAL2 is a facilitated diffusion transporter required for both the high-affinity galactokinase-dependent and low-affinity galactokinase-independent galactose transport processes. The chain is Galactose transporter (GAL2) from Saccharomyces cerevisiae (strain ATCC 204508 / S288c) (Baker's yeast).